A 213-amino-acid chain; its full sequence is Peptidyl-tRNA hydrolase (213 aa).

Tyr26 contacts tRNA. His31 serves as the catalytic Proton acceptor. Residues Tyr78, Asn80, and Asn126 each contribute to the tRNA site.

The protein belongs to the PTH family. In terms of assembly, monomer.

The protein resides in the cytoplasm. It catalyses the reaction an N-acyl-L-alpha-aminoacyl-tRNA + H2O = an N-acyl-L-amino acid + a tRNA + H(+). Its function is as follows. Hydrolyzes ribosome-free peptidyl-tRNAs (with 1 or more amino acids incorporated), which drop off the ribosome during protein synthesis, or as a result of ribosome stalling. Catalyzes the release of premature peptidyl moieties from peptidyl-tRNA molecules trapped in stalled 50S ribosomal subunits, and thus maintains levels of free tRNAs and 50S ribosomes. The sequence is that of Peptidyl-tRNA hydrolase from Nostoc punctiforme (strain ATCC 29133 / PCC 73102).